We begin with the raw amino-acid sequence, 948 residues long: UvrABC system protein A (948 aa).

Residue 33 to 40 coordinates ATP; sequence GLSGSGKS. A C4-type zinc finger spans residues 252-279; sequence CPICGFSIGELEPRMFSFNSPFGACPTC. 2 consecutive ABC transporter domains span residues 309-587 and 607-935; these read WIPT…KKSL and ASDR…KYLK. 639–646 provides a ligand contact to ATP; it reads GVSGSGKS. The segment at 738 to 764 adopts a C4-type zinc-finger fold; it reads CEACKGDGIIKIEMHFLPDVYVPCEVC.

The protein belongs to the ABC transporter superfamily. UvrA family. In terms of assembly, forms a heterotetramer with UvrB during the search for lesions.

It is found in the cytoplasm. Functionally, the UvrABC repair system catalyzes the recognition and processing of DNA lesions. UvrA is an ATPase and a DNA-binding protein. A damage recognition complex composed of 2 UvrA and 2 UvrB subunits scans DNA for abnormalities. When the presence of a lesion has been verified by UvrB, the UvrA molecules dissociate. This is UvrABC system protein A from Staphylococcus aureus (strain N315).